The primary structure comprises 229 residues: ABC transporter I family member 1 (229 aa).

In terms of domain architecture, ABC transporter spans 11-228 (LLLQNVSCMR…LIDMLDRADI (218 aa)). An ATP-binding site is contributed by 43-50 (GTNGSGKS).

The protein belongs to the ABC transporter superfamily. ABCI family.

The protein localises to the membrane. It carries out the reaction heme b(in) + ATP + H2O = heme b(out) + ADP + phosphate + H(+). Its function is as follows. Part of the ABC transporter complex CcmAB involved in the biogenesis of c-type cytochromes; once thought to export heme, this seems not to be the case, but its exact role is uncertain. Responsible for energy coupling to the transport system. The sequence is that of ABC transporter I family member 1 (ABCI1) from Arabidopsis thaliana (Mouse-ear cress).